The chain runs to 138 residues: Large ribosomal subunit protein uL16 (138 aa).

The segment covering 1–16 (MLIPKRVKYRRQHRPT) has biased composition (basic residues). Positions 1–23 (MLIPKRVKYRRQHRPTRSGISKG) are disordered.

It belongs to the universal ribosomal protein uL16 family. Part of the 50S ribosomal subunit.

In terms of biological role, binds 23S rRNA and is also seen to make contacts with the A and possibly P site tRNAs. This Corynebacterium glutamicum (strain R) protein is Large ribosomal subunit protein uL16.